The primary structure comprises 1658 residues: Collagen alpha-1(XXVII) chain B (1658 aa).

Positions 1-38 (MEPDNTPSSRLRAAGVGGRAVFFCMVLYCTCCLRLAQA) are cleaved as a signal peptide. The Laminin G-like domain maps to 66–229 (GVILTTRARI…NYCKYIKKQC (164 aa)). Polar residues predominate over residues 308–323 (SIRNRTSQISPKPTQQ). Disordered stretches follow at residues 308–332 (SIRN…KKER), 345–364 (VTDS…TTTT), 427–550 (GLKG…GNMG), 571–614 (GERG…APGP), 637–1332 (GPKG…DAGE), and 1377–1415 (IIGP…GPPG). Residues 424-1417 (ELTGLKGEPG…RGPPGPPGLP (994 aa)) form a triple-helical region region. 7 Collagen-like domains span residues 425-478 (LTGL…GNPG), 493-552 (GLVG…MGPK), 556-615 (GFIG…PGPV), 622-681 (GDMG…PGLP), 685-744 (GKPG…PGLE), 748-807 (GPVG…MGLA), and 811-870 (GDRG…RGPD). Over residues 434 to 444 (LPGPPGPPGQP) the composition is skewed to pro residues. Positions 491–506 (DPGLVGLPGQPGQPGR) are enriched in low complexity. 2 stretches are compositionally biased toward low complexity: residues 657 to 666 (LGLPGEPGEP) and 678 to 692 (PGLP…PQGK). Residues 733–742 (GIPGPGGLPG) are compositionally biased toward gly residues. Composition is skewed to low complexity over residues 837–852 (RGLS…HGSR) and 875–890 (EKGM…PPGK). Collagen-like domains are found at residues 892-951 (GLSG…IGLP), 952-1011 (GKAG…VGLE), 1024-1083 (GTEG…IGPK), 1084-1137 (GSRG…DGKV), 1139-1198 (GPPG…KGSK), 1199-1258 (GNKG…PGDL), 1268-1327 (GKPG…KGQP), and 1361-1420 (GPQG…PAVA). Residues 1040-1058 (PEGKPGKIGERGKPGEKGS) are compositionally biased toward basic and acidic residues. Over residues 1112 to 1124 (HQGPQGSLGSPGP) the composition is skewed to low complexity. Residues 1125–1137 (KGEKGEQGDDGKV) show a composition bias toward basic and acidic residues. Residues 1215–1230 (NRGSPGPVGVPGPRGV) show a composition bias toward low complexity. Residues 1307-1316 (GLNGGMGFPG) show a composition bias toward gly residues. Positions 1402-1415 (RGPPGPRGPPGPPG) are enriched in pro residues. Residues 1421-1658 (FSHENEALGA…HLEVGPVCFL (238 aa)) constitute a propeptide, C-terminal propeptide. The region spanning 1458–1658 (SEIFKTLHYL…HLEVGPVCFL (201 aa)) is the Fibrillar collagen NC1 domain. Disulfide bonds link cysteine 1488-cysteine 1520, cysteine 1529-cysteine 1656, and cysteine 1565-cysteine 1609. Residues aspartate 1506, asparagine 1508, cysteine 1511, and aspartate 1514 each contribute to the Ca(2+) site. The N-linked (GlcNAc...) asparagine glycan is linked to asparagine 1567.

It belongs to the fibrillar collagen family. As to expression, weakly expressed in the notochord from the 6 somite stage. Expressed throughout the notochord at 13 somites, then becomes restricted to the distal tip of the notochord by 24 hpf. Also expressed in head cartilages by 48 hpf.

The protein localises to the secreted. It localises to the extracellular space. Its subcellular location is the extracellular matrix. Functionally, may play a role during the calcification of cartilage and the transition of cartilage to bone. Together with col27a1a, plays a role in development of the notochord and axial skeleton. The sequence is that of Collagen alpha-1(XXVII) chain B (col27a1b) from Danio rerio (Zebrafish).